A 236-amino-acid polypeptide reads, in one-letter code: 2-C-methyl-D-erythritol 4-phosphate cytidylyltransferase (236 aa).

This sequence belongs to the IspD/TarI cytidylyltransferase family. IspD subfamily. In terms of assembly, homodimer.

The catalysed reaction is 2-C-methyl-D-erythritol 4-phosphate + CTP + H(+) = 4-CDP-2-C-methyl-D-erythritol + diphosphate. The protein operates within isoprenoid biosynthesis; isopentenyl diphosphate biosynthesis via DXP pathway; isopentenyl diphosphate from 1-deoxy-D-xylulose 5-phosphate: step 2/6. Catalyzes the formation of 4-diphosphocytidyl-2-C-methyl-D-erythritol from CTP and 2-C-methyl-D-erythritol 4-phosphate (MEP). The sequence is that of 2-C-methyl-D-erythritol 4-phosphate cytidylyltransferase from Escherichia coli O139:H28 (strain E24377A / ETEC).